We begin with the raw amino-acid sequence, 221 residues long: Small ribosomal subunit protein uS3 (221 aa).

One can recognise a KH type-2 domain in the interval 39 to 108 (IRKFVKKRSY…NVIINIVEVK (70 aa)).

This sequence belongs to the universal ribosomal protein uS3 family. In terms of assembly, part of the 30S ribosomal subunit. Forms a tight complex with proteins S10 and S14.

Functionally, binds the lower part of the 30S subunit head. Binds mRNA in the 70S ribosome, positioning it for translation. This chain is Small ribosomal subunit protein uS3, found in Clostridium novyi (strain NT).